A 368-amino-acid polypeptide reads, in one-letter code: Phosphoserine aminotransferase (368 aa).

Position 44 (Arg-44) interacts with L-glutamate. Residues 78 to 79 (AT), Trp-104, Thr-157, Asp-179, and Gln-202 contribute to the pyridoxal 5'-phosphate site. Lys-203 carries the post-translational modification N6-(pyridoxal phosphate)lysine. Residue 244–245 (NT) participates in pyridoxal 5'-phosphate binding.

Belongs to the class-V pyridoxal-phosphate-dependent aminotransferase family. SerC subfamily. In terms of assembly, homodimer. It depends on pyridoxal 5'-phosphate as a cofactor.

Its subcellular location is the cytoplasm. The enzyme catalyses O-phospho-L-serine + 2-oxoglutarate = 3-phosphooxypyruvate + L-glutamate. It carries out the reaction 4-(phosphooxy)-L-threonine + 2-oxoglutarate = (R)-3-hydroxy-2-oxo-4-phosphooxybutanoate + L-glutamate. It participates in amino-acid biosynthesis; L-serine biosynthesis; L-serine from 3-phospho-D-glycerate: step 2/3. It functions in the pathway cofactor biosynthesis; pyridoxine 5'-phosphate biosynthesis; pyridoxine 5'-phosphate from D-erythrose 4-phosphate: step 3/5. Its function is as follows. Catalyzes the reversible conversion of 3-phosphohydroxypyruvate to phosphoserine and of 3-hydroxy-2-oxo-4-phosphonooxybutanoate to phosphohydroxythreonine. This is Phosphoserine aminotransferase from Neisseria gonorrhoeae (strain ATCC 700825 / FA 1090).